The primary structure comprises 783 residues: Transcription factor Sp3 (783 aa).

The span at 1-12 (MTAPEKPVKQEE) shows a compositional bias: basic and acidic residues. The disordered stretch occupies residues 1-55 (MTAPEKPVKQEEMAALDVDGGGGGGGHGEYLQQQQQQQQQHGNGAAAAAAQDTQP). The segment covering 19-28 (DGGGGGGGHG) has biased composition (gly residues). Low complexity predominate over residues 29-51 (EYLQQQQQQQQQHGNGAAAAAAQ). At Ser72 the chain carries Phosphoserine. Residue Lys122 forms a Glycyl lysine isopeptide (Lys-Gly) (interchain with G-Cter in SUMO) linkage. The interval 140–239 (QYVLPLQNLQ…IPQTGQVQVQ (100 aa)) is transactivation domain (Gln-rich). The interval 302 to 340 (GQAMDSSDNSERTGERVSPDVNETNADTDLFVPTSSSSQ) is disordered. A compositionally biased stretch (basic and acidic residues) spans 310 to 319 (NSERTGERVS). Positions 322–340 (VNETNADTDLFVPTSSSSQ) are enriched in polar residues. Residues 352–501 (QQNTNSLTTT…TPVQTLTLGQ (150 aa)) form a transactivation domain (Gln-rich) region. The 9aaTAD motif lies at 463 to 471 (ITWQTFQVQ). The segment at 536 to 622 (IQLHPGENAD…RGTNLGKKKQ (87 aa)) is repressor domain. N6-acetyllysine; alternate is present on Lys553. Lys553 is covalently cross-linked (Glycyl lysine isopeptide (Lys-Gly) (interchain with G-Cter in SUMO); alternate). Residue Lys553 forms a Glycyl lysine isopeptide (Lys-Gly) (interchain with G-Cter in SUMO1); alternate linkage. Residue Lys553 forms a Glycyl lysine isopeptide (Lys-Gly) (interchain with G-Cter in SUMO2); alternate linkage. Phosphoserine is present on residues Ser565 and Ser568. Lys595 is covalently cross-linked (Glycyl lysine isopeptide (Lys-Gly) (interchain with G-Cter in SUMO2)). The C2H2-type 1 zinc-finger motif lies at 623–647 (HICHIPGCGKVYGKTSHLRAHLRWH). Ser648 carries the phosphoserine modification. C2H2-type zinc fingers lie at residues 653-677 (FICNWMFCGKRFTRSDELQRHRRTH) and 683-705 (FVCPECSKRFMRSDHLAKHIKTH).

The protein belongs to the Sp1 C2H2-type zinc-finger protein family. As to quaternary structure, interacts with HLTF; the interaction may be required for basal transcriptional activity of HLTF. Interacts with HDAC1; the interaction deacetylates SP3 and regulates its transcriptional activity. Interacts with HDAC2 (preferably the CK2-phosphorylated form); the interaction deacetylates SP3 and regulates its transcriptional activity. Ceramides can also regulate acetylation/deacetylation events through altering the interaction of HDAC with SP3. Interacts with MEIS2 isoform Meis2D and PBX1 isoform PBX1a. In terms of processing, acetylated by histone acetyltransferase p300, deacetylated by HDACs. Acetylation/deacetylation states regulate transcriptional activity. Acetylation appears to activate transcription. Alternate sumoylation and acetylation at Lys-553 also control transcriptional activity. Sumoylated on all isoforms. Sumoylated on 2 sites in longer isoforms with Lys-553 being the major site. Sumoylation at this site promotes nuclear localization to the nuclear periphery, nuclear dots and PML nuclear bodies. Sumoylation on Lys-553 represses the transactivation activity, except for the largest isoform which has little effect on transactivation. Alternate sumoylation and acetylation at Lys-553 also control transcriptional activity.

The protein localises to the nucleus. It is found in the PML body. Transcriptional factor that can act as an activator or repressor depending on isoform and/or post-translational modifications. Binds to GT and GC boxes promoter elements. Competes with SP1 for the GC-box promoters. Weak activator of transcription but can activate a number of genes involved in different processes such as cell-cycle regulation, hormone-induction and house-keeping. The chain is Transcription factor Sp3 (Sp3) from Mus musculus (Mouse).